A 352-amino-acid polypeptide reads, in one-letter code: Popeye domain-containing protein 1 (352 aa).

Residues 1-38 are Extracellular-facing; sequence MSNTTSALPSSVPAVSLDPNATLCQDWEQSHHLLFHLA. N-linked (GlcNAc...) asparagine glycosylation is found at Asn3 and Asn20. Residues 39–59 form a helical membrane-spanning segment; it reads NLSLGLGFLIPTTLALHMIFL. A topological domain (cytoplasmic) is located at residue Arg60. A helical membrane pass occupies residues 61-81; that stretch reads LLLMTGCSLFIAWATLYRCTL. Asp82 is a topological domain (extracellular). The chain crosses the membrane as a helical span at residues 83–103; that stretch reads VMVWNVVFLLVNFMHFFFLLY. Residues 104–352 are Cytoplasmic-facing; the sequence is KRRPIKIDRE…NVSKTTKKDI (249 aa). The tract at residues 299 to 352 is disordered; the sequence is ILRGGSTGSSLQKNPLTKTSTTMKPIEEGLEDDVFESESPTTSQNVSKTTKKDI. Composition is skewed to polar residues over residues 306-321 and 336-346; these read GSSLQKNPLTKTSTTM and ESPTTSQNVSK.

Belongs to the popeye family. In terms of tissue distribution, expressed in skeletal muscle (at protein level).

It localises to the lateral cell membrane. The protein resides in the cell junction. It is found in the tight junction. The protein localises to the membrane. Its subcellular location is the cell membrane. It localises to the sarcolemma. The protein resides in the caveola. Functionally, cell adhesion molecule involved in the establishment and/or maintenance of cell integrity. Involved in skeletal muscle and heart development as well as in the maintenance of heart function. May play a role in vamp3-mediated vesicular transport and recycling of receptor molecules. Involved in the formation and regulation of the tight junction (TJ) paracellular permeability barrier in epithelial cells. May induce primordial adhesive contact and aggregation of epithelial cells in a Ca(2+)-independent manner. May be involved in epithelial movement during corneal sheet formation and regeneration. May play a role in the regulation of cell shape and movement by modulating the Rho-GTPase activity. May also be involved in striated muscle regeneration and in the regulation of cell spreading. This is Popeye domain-containing protein 1 (popdc1) from Danio rerio (Zebrafish).